A 725-amino-acid chain; its full sequence is MDSRTKGKTVMEVGGDGVAVITLINPPVNSLSFDVLYNLKSNYEEALSRNDVKAIVITGAKGRFSGGFDISGFGEMQKGNVKEPKAGYISIDIITDLLEAARKPSVAAIDGLALGGGLELAMACHARISAPAAQLGLPELQLGVIPGFGGTQRLPRLVGLTKALEMILTSKPVKAEEGHSLGLIDAVVPPAELVTTARRWALDIVGRRKPWVSSVSKTDKLPPLGEAREILTFAKAQTLKRAPNMKHPLMCLDAIEVGIVSGPRAGLEKEAEVASQVVKLDTTKGLIHVFFSQRGTAKVPGVTDRGLVPRKIKKVAIIGGGLMGSGIATALILSNYPVILKEVNEKFLEAGIGRVKANLQSRVRKGSMSQEKFEKTMSLLKGSLDYESFRDVDMVIEAVIENISLKQQIFADLEKYCPQHCILASNTSTIDLNKIGERTKSQDRIVGAHFFSPAHIMPLLEIVRTNHTSAQVIVDLLDVGKKIKKTPVVVGNCTGFAVNRMFFPYTQAAMFLVECGADPYLIDRAISKFGMPMGPFRLCDLVGFGVAIATATQFIENFSERTYKSMIIPLMQEDKRAGEATRKGFYLYDDKRKAKPDPELKKYIEKARSISGVKLDPKLANLSEKDIIEMTFFPVVNEACRVFAEGIAVKAADLDIAGIMGMGFPPYRGGIMFWADSIGSKYIYSRLDEWSKAYGEFFKPCAFLAERGSKGVLLSAPVKQASSRL.

E119 acts as the Nucleophile in catalysis. E139 (proton acceptor) is an active-site residue. Positions 723–725 match the Microbody targeting signal motif; the sequence is SRL.

In the N-terminal section; belongs to the enoyl-CoA hydratase/isomerase family. This sequence in the central section; belongs to the 3-hydroxyacyl-CoA dehydrogenase family. In terms of tissue distribution, highly expressed in senescing leaves and at lower levels in flowers and siliques.

The protein localises to the glyoxysome. The protein resides in the peroxisome. It carries out the reaction a (3S)-3-hydroxyacyl-CoA = a (2E)-enoyl-CoA + H2O. The catalysed reaction is a 4-saturated-(3S)-3-hydroxyacyl-CoA = a (3E)-enoyl-CoA + H2O. It catalyses the reaction (3S)-3-hydroxybutanoyl-CoA = (2E)-butenoyl-CoA + H2O. The enzyme catalyses (3S)-hydroxyoctanoyl-CoA = (2E)-octenoyl-CoA + H2O. It carries out the reaction (3S)-3-hydroxydodecanoyl-CoA = (2E)-dodecenoyl-CoA + H2O. The catalysed reaction is (3S)-hydroxytetradecanoyl-CoA = (2E)-tetradecenoyl-CoA + H2O. It catalyses the reaction (3S)-hydroxyhexanoyl-CoA = (2E)-hexenoyl-CoA + H2O. The enzyme catalyses a (3Z)-enoyl-CoA = a 4-saturated (2E)-enoyl-CoA. It carries out the reaction a (3E)-enoyl-CoA = a 4-saturated (2E)-enoyl-CoA. The catalysed reaction is (3S)-3-hydroxybutanoyl-CoA = (3R)-3-hydroxybutanoyl-CoA. It catalyses the reaction a (3S)-3-hydroxyacyl-CoA + NAD(+) = a 3-oxoacyl-CoA + NADH + H(+). The enzyme catalyses (3S)-3-hydroxybutanoyl-CoA + NAD(+) = acetoacetyl-CoA + NADH + H(+). It carries out the reaction (3S)-hydroxyhexanoyl-CoA + NAD(+) = 3-oxohexanoyl-CoA + NADH + H(+). The catalysed reaction is (3S)-hydroxyoctanoyl-CoA + NAD(+) = 3-oxooctanoyl-CoA + NADH + H(+). It catalyses the reaction (3S)-3-hydroxydodecanoyl-CoA + NAD(+) = 3-oxododecanoyl-CoA + NADH + H(+). The enzyme catalyses (3S)-hydroxytetradecanoyl-CoA + NAD(+) = 3-oxotetradecanoyl-CoA + NADH + H(+). The protein operates within lipid metabolism; fatty acid beta-oxidation. In terms of biological role, involved in peroxisomal fatty acid beta-oxidation during seed germination. Possesses enoyl-CoA hydratase activity against long chain substrates (C14-C18) and 3-hydroxyacyl-CoA dehydrogenase activity against chains of variable sizes (C6-C18). Possesses 3-hydroxy-3-phenylpropionyl-CoA dehydrogenase activity and is involved in the peroxisomal beta-oxidation pathway for the biosynthesis of benzoic acid (BA). Required for the accumulation in seeds of substituted hydroxybenzoylated choline esters, which are BA-containing secondary metabolites. Fatty acid beta-oxidation pathway in peroxisomes regulates gene silencing, histone acetylation and DNA methylation. This is Peroxisomal fatty acid beta-oxidation multifunctional protein MFP2 from Arabidopsis thaliana (Mouse-ear cress).